The following is a 353-amino-acid chain: Photosystem II D2 protein (353 aa).

The residue at position 2 (T2) is an N-acetylthreonine. A Phosphothreonine modification is found at T2. The helical transmembrane segment at 41-61 threads the bilayer; sequence CAYFALGGWFTGTTFVTSWYT. A chlorophyll a-binding site is contributed by H118. Residues 125-141 form a helical membrane-spanning segment; it reads GFMLRQFELARSVQLRP. Residues Q130 and N143 each coordinate pheophytin a. A helical transmembrane segment spans residues 153–166; it reads VFVSVFLIYPLGQS. H198 is a chlorophyll a binding site. Residues 208 to 228 form a helical membrane-spanning segment; sequence AALLCAIHGATVENTLFEDGD. Residues H215 and F262 each coordinate a plastoquinone. A Fe cation-binding site is contributed by H215. H269 lines the Fe cation pocket. The helical transmembrane segment at 279 to 295 threads the bilayer; it reads GLWMSALGVVGLALNLR.

It belongs to the reaction center PufL/M/PsbA/D family. PSII is composed of 1 copy each of membrane proteins PsbA, PsbB, PsbC, PsbD, PsbE, PsbF, PsbH, PsbI, PsbJ, PsbK, PsbL, PsbM, PsbT, PsbX, PsbY, PsbZ, Psb30/Ycf12, at least 3 peripheral proteins of the oxygen-evolving complex and a large number of cofactors. It forms dimeric complexes. Interacts with PAM68. The D1/D2 heterodimer binds P680, chlorophylls that are the primary electron donor of PSII, and subsequent electron acceptors. It shares a non-heme iron and each subunit binds pheophytin, quinone, additional chlorophylls, carotenoids and lipids. There is also a Cl(-1) ion associated with D1 and D2, which is required for oxygen evolution. The PSII complex binds additional chlorophylls, carotenoids and specific lipids. is required as a cofactor. Post-translationally, phosphorylation occurs in normal plant growth light conditions. Rapid dephosphorylation occurs during heat shock.

The protein resides in the plastid. It is found in the chloroplast thylakoid membrane. The catalysed reaction is 2 a plastoquinone + 4 hnu + 2 H2O = 2 a plastoquinol + O2. Functionally, photosystem II (PSII) is a light-driven water:plastoquinone oxidoreductase that uses light energy to abstract electrons from H(2)O, generating O(2) and a proton gradient subsequently used for ATP formation. It consists of a core antenna complex that captures photons, and an electron transfer chain that converts photonic excitation into a charge separation. The D1/D2 (PsbA/PsbD) reaction center heterodimer binds P680, the primary electron donor of PSII as well as several subsequent electron acceptors. D2 is needed for assembly of a stable PSII complex. This is Photosystem II D2 protein from Arabidopsis thaliana (Mouse-ear cress).